We begin with the raw amino-acid sequence, 414 residues long: 3-oxoacyl-[acyl-carrier-protein] synthase 2 (414 aa).

In terms of domain architecture, Ketosynthase family 3 (KS3) spans 3–411; that stretch reads KRRVVITGLG…GTNGTLVLSR (409 aa). Residues Cys-164, His-304, and His-341 each act as for beta-ketoacyl synthase activity in the active site.

Belongs to the thiolase-like superfamily. Beta-ketoacyl-ACP synthases family. Homodimer.

It catalyses the reaction a fatty acyl-[ACP] + malonyl-[ACP] + H(+) = a 3-oxoacyl-[ACP] + holo-[ACP] + CO2. The catalysed reaction is (9Z)-hexadecenoyl-[ACP] + malonyl-[ACP] + H(+) = 3-oxo-(11Z)-octadecenoyl-[ACP] + holo-[ACP] + CO2. It participates in lipid metabolism; fatty acid biosynthesis. In terms of biological role, involved in the type II fatty acid elongation cycle. Catalyzes the elongation of a wide range of acyl-ACP by the addition of two carbons from malonyl-ACP to an acyl acceptor. Can efficiently catalyze the conversion of palmitoleoyl-ACP (cis-hexadec-9-enoyl-ACP) to cis-vaccenoyl-ACP (cis-octadec-11-enoyl-ACP), an essential step in the thermal regulation of fatty acid composition. This Coxiella burnetii (strain RSA 493 / Nine Mile phase I) protein is 3-oxoacyl-[acyl-carrier-protein] synthase 2 (fabF).